The sequence spans 129 residues: MKSVQFCFLFCCWRAICCRSCELTNITITVEKEECSFCISINTTWCAGYCYTRDLVYKDPARPNIQKACTFKELVYETVKVPGCAHHADSLYTYPVATECHCGKCDRDSTDCTVRGLGPSYCSFSDIRE.

Residues 1-19 form the signal peptide; it reads MKSVQFCFLFCCWRAICCR. Cystine bridges form between Cys-21–Cys-69, Cys-35–Cys-84, Cys-38–Cys-122, Cys-46–Cys-100, Cys-50–Cys-102, and Cys-105–Cys-112. Residues Asn-25 and Asn-42 are each glycosylated (N-linked (GlcNAc...) asparagine).

The protein belongs to the glycoprotein hormones subunit beta family. In terms of assembly, heterodimer. The active follitropin is a heterodimer composed of an alpha chain/CGA shared with other hormones and a unique beta chain/FSHB shown here.

It localises to the secreted. In terms of biological role, together with the alpha chain CGA constitutes follitropin, the follicle-stimulating hormone, and provides its biological specificity to the hormone heterodimer. Binds FSHR, a G protein-coupled receptor, on target cells to activate downstream signaling pathways. Follitropin is involved in follicle development and spermatogenesis in reproductive organs. In Ovis aries (Sheep), this protein is Follitropin subunit beta (FSHB).